The following is a 95-amino-acid chain: Large ribosomal subunit protein bL25 (95 aa).

Belongs to the bacterial ribosomal protein bL25 family. As to quaternary structure, part of the 50S ribosomal subunit; part of the 5S rRNA/L5/L18/L25 subcomplex. Contacts the 5S rRNA. Binds to the 5S rRNA independently of L5 and L18.

This is one of the proteins that binds to the 5S RNA in the ribosome where it forms part of the central protuberance. In Haemophilus influenzae (strain ATCC 51907 / DSM 11121 / KW20 / Rd), this protein is Large ribosomal subunit protein bL25.